Consider the following 428-residue polypeptide: Elongation factor 1-alpha (428 aa).

Residues 5-217 (KPHVNIVFIG…DQIPEPEKPV (213 aa)) enclose the tr-type G domain. Residues 14 to 21 (GHVDHGKS) form a G1 region. Residue 14-21 (GHVDHGKS) coordinates GTP. S21 lines the Mg(2+) pocket. A G2 region spans residues 68–72 (GITID). A G3 region spans residues 89-92 (DAPG). GTP contacts are provided by residues 89–93 (DAPGH) and 144–147 (NKMD). Positions 144–147 (NKMD) are G4. The tract at residues 181–183 (SAW) is G5.

Belongs to the TRAFAC class translation factor GTPase superfamily. Classic translation factor GTPase family. EF-Tu/EF-1A subfamily.

Its subcellular location is the cytoplasm. The enzyme catalyses GTP + H2O = GDP + phosphate + H(+). GTP hydrolase that promotes the GTP-dependent binding of aminoacyl-tRNA to the A-site of ribosomes during protein biosynthesis. The chain is Elongation factor 1-alpha from Pyrococcus furiosus (strain ATCC 43587 / DSM 3638 / JCM 8422 / Vc1).